Reading from the N-terminus, the 149-residue chain is Inner membrane protein YidI (149 aa).

Topologically, residues 1-8 are cytoplasmic; that stretch reads MGIIAQNK. A helical transmembrane segment spans residues 9 to 31; the sequence is ISSLGMLFGAIALMMGIIHFSFG. Topologically, residues 32-77 are periplasmic; it reads PFSAPPPTFESIVADKTAEIKRGLLAGIKGEKITTVEKKEDVDVDK. A helical membrane pass occupies residues 78 to 97; sequence ILNQSGIALAIAALLCAFIG. Over 98-117 the chain is Cytoplasmic; sequence GMRKENRWGIRGALVFGGGT. A helical transmembrane segment spans residues 118–140; that stretch reads LAFHTLLFGIGIVCSILLIFLIF. At 141–149 the chain is on the periplasmic side; the sequence is SFLTGGSLV.

The protein resides in the cell inner membrane. The polypeptide is Inner membrane protein YidI (yidI) (Escherichia coli (strain K12)).